A 65-amino-acid chain; its full sequence is Large ribosomal subunit protein bL35 (65 aa).

Belongs to the bacterial ribosomal protein bL35 family.

The protein is Large ribosomal subunit protein bL35 of Desulfitobacterium hafniense (strain DSM 10664 / DCB-2).